A 134-amino-acid chain; its full sequence is Protein Turandot E (134 aa).

Positions M1 to C38 are cleaved as a signal peptide.

It belongs to the Turandot family.

It is found in the secreted. A humoral factor that may play a role in stress tolerance. This Drosophila melanogaster (Fruit fly) protein is Protein Turandot E.